The following is a 298-amino-acid chain: Pantothenate synthetase (298 aa).

30–37 (MGNLHEGH) provides a ligand contact to ATP. His37 functions as the Proton donor in the catalytic mechanism. Gln61 contacts (R)-pantoate. A beta-alanine-binding site is contributed by Gln61. 149–152 (GEKD) lines the ATP pocket. Gln155 contacts (R)-pantoate. Residues Val178 and 186 to 189 (MSSR) each bind ATP.

Belongs to the pantothenate synthetase family. Homodimer.

The protein resides in the cytoplasm. It catalyses the reaction (R)-pantoate + beta-alanine + ATP = (R)-pantothenate + AMP + diphosphate + H(+). The protein operates within cofactor biosynthesis; (R)-pantothenate biosynthesis; (R)-pantothenate from (R)-pantoate and beta-alanine: step 1/1. Its function is as follows. Catalyzes the condensation of pantoate with beta-alanine in an ATP-dependent reaction via a pantoyl-adenylate intermediate. This is Pantothenate synthetase from Aliivibrio salmonicida (strain LFI1238) (Vibrio salmonicida (strain LFI1238)).